The following is a 573-amino-acid chain: SHC-transforming protein 2 (573 aa).

The region spanning L125 to D309 is the PID domain. The CH1 stretch occupies residues A310–P477. Y316, Y317, and Y395 each carry phosphotyrosine. The SH2 domain occupies W478 to V569.

Interacts with the Trk receptors in a phosphotyrosine-dependent manner and MEGF12. Once activated, binds to GRB2. In terms of processing, phosphorylated on tyrosine by the Trk receptors. In terms of tissue distribution, expressed in brain. Expressed at high level in the hypothalamus and at low level in the caudate nucleus.

Functionally, signaling adapter that couples activated growth factor receptors to signaling pathway in neurons. Involved in the signal transduction pathways of neurotrophin-activated Trk receptors in cortical neurons. The chain is SHC-transforming protein 2 (Shc2) from Mus musculus (Mouse).